The sequence spans 287 residues: 4-hydroxybenzoate octaprenyltransferase (287 aa).

The next 9 membrane-spanning stretches (helical) occupy residues 21–41 (VGIF…AKGA), 44–64 (FKIA…GCIV), 91–111 (VTEA…LVLL), 112–132 (LNRL…VYPF), 139–159 (LPQL…FAAT), 160–180 (VGHV…WPIV), 211–231 (LMIG…GWYL), 235–255 (YWFY…QFLI), and 263–283 (CFAA…GILL).

The protein belongs to the UbiA prenyltransferase family. It depends on Mg(2+) as a cofactor.

The protein resides in the cell inner membrane. It carries out the reaction all-trans-octaprenyl diphosphate + 4-hydroxybenzoate = 4-hydroxy-3-(all-trans-octaprenyl)benzoate + diphosphate. The protein operates within cofactor biosynthesis; ubiquinone biosynthesis. In terms of biological role, catalyzes the prenylation of para-hydroxybenzoate (PHB) with an all-trans polyprenyl group. Mediates the second step in the final reaction sequence of ubiquinone-8 (UQ-8) biosynthesis, which is the condensation of the polyisoprenoid side chain with PHB, generating the first membrane-bound Q intermediate 3-octaprenyl-4-hydroxybenzoate. The polypeptide is 4-hydroxybenzoate octaprenyltransferase (Coxiella burnetii (strain RSA 331 / Henzerling II)).